A 250-amino-acid polypeptide reads, in one-letter code: Phosphonates import ATP-binding protein PhnC (250 aa).

An ABC transporter domain is found at I2 to I247. Residue G35–T42 coordinates ATP.

This sequence belongs to the ABC transporter superfamily. Phosphonates importer (TC 3.A.1.9.1) family. The complex is composed of two ATP-binding proteins (PhnC), two transmembrane proteins (PhnE) and a solute-binding protein (PhnD).

The protein localises to the cell membrane. The enzyme catalyses phosphonate(out) + ATP + H2O = phosphonate(in) + ADP + phosphate + H(+). In terms of biological role, part of the ABC transporter complex PhnCDE involved in phosphonates import. Responsible for energy coupling to the transport system. The sequence is that of Phosphonates import ATP-binding protein PhnC from Mycoplasma capricolum subsp. capricolum (strain California kid / ATCC 27343 / NCTC 10154).